A 314-amino-acid polypeptide reads, in one-letter code: tRNA uridine(34) hydroxylase (314 aa).

In terms of domain architecture, Rhodanese spans 140 to 234 (ARDDVILIDT…YLEETPPDES (95 aa)). Catalysis depends on cysteine 194, which acts as the Cysteine persulfide intermediate.

Belongs to the TrhO family.

The catalysed reaction is uridine(34) in tRNA + AH2 + O2 = 5-hydroxyuridine(34) in tRNA + A + H2O. Its function is as follows. Catalyzes oxygen-dependent 5-hydroxyuridine (ho5U) modification at position 34 in tRNAs. The protein is tRNA uridine(34) hydroxylase of Acinetobacter baumannii (strain SDF).